The sequence spans 820 residues: Scavenger receptor class F member 1 (820 aa).

Positions methionine 1–glycine 23 are cleaved as a signal peptide. Topologically, residues serine 24–asparagine 422 are extracellular. EGF-like domains lie at threonine 56–serine 90, tryptophan 98–glutamate 133, arginine 163–serine 193, and tryptophan 217–glutamate 251. 12 disulfide bridges follow: cysteine 60/cysteine 72, cysteine 66/cysteine 78, cysteine 80/cysteine 89, cysteine 102/cysteine 114, cysteine 108/cysteine 121, cysteine 123/cysteine 132, cysteine 166/cysteine 174, cysteine 168/cysteine 181, cysteine 183/cysteine 192, cysteine 221/cysteine 232, cysteine 225/cysteine 239, and cysteine 241/cysteine 250. N-linked (GlcNAc...) asparagine glycosylation occurs at asparagine 291. EGF-like domains follow at residues phenylalanine 304–glutamate 341 and cysteine 353–asparagine 384. The chain crosses the membrane as a helical span at residues alanine 423–alanine 443. The Cytoplasmic segment spans residues tyrosine 444–histidine 820. Disordered stretches follow at residues proline 549–serine 685 and asparagine 715–histidine 820. 2 positions are modified to phosphoserine: serine 590 and serine 607. A compositionally biased stretch (acidic residues) spans glutamine 631–alanine 648. Residues threonine 650 to glycine 662 show a composition bias toward polar residues.

Heterophilic interaction with SREC2 via its extracellular domain. The heterophilic interaction is suppressed by the presence of ligand such as Ac-LDL. Interacts with AVIL; the interaction occurs in embryonic dorsal root ganglions at 18 dpc and induces neurite-like outgrowth. As to expression, expressed weakly in brain, spinal cord and dorsal root ganglions.

Its subcellular location is the membrane. In terms of biological role, mediates the binding and degradation of acetylated low density lipoprotein (Ac-LDL). Mediates heterophilic interactions, suggesting a function as adhesion protein. Plays a role in the regulation of neurite-like outgrowth. This chain is Scavenger receptor class F member 1 (Scarf1), found in Mus musculus (Mouse).